The following is a 320-amino-acid chain: ADP-L-glycero-D-manno-heptose-6-epimerase (320 aa).

NADP(+)-binding positions include 10 to 11, 31 to 32, Lys38, Lys53, 75 to 79, and Asn92; these read FI, DN, and LGACS. Tyr139 serves as the catalytic Proton acceptor. Lys143 provides a ligand contact to NADP(+). Asn168 contributes to the substrate binding site. 2 residues coordinate NADP(+): Val169 and Lys177. The active-site Proton acceptor is the Lys177. Residues Gly179, His186, 200–203, Arg213, and Tyr277 contribute to the substrate site; that span reads FEGS.

It belongs to the NAD(P)-dependent epimerase/dehydratase family. HldD subfamily. As to quaternary structure, homopentamer. The cofactor is NADP(+).

It carries out the reaction ADP-D-glycero-beta-D-manno-heptose = ADP-L-glycero-beta-D-manno-heptose. The protein operates within nucleotide-sugar biosynthesis; ADP-L-glycero-beta-D-manno-heptose biosynthesis; ADP-L-glycero-beta-D-manno-heptose from D-glycero-beta-D-manno-heptose 7-phosphate: step 4/4. In terms of biological role, catalyzes the interconversion between ADP-D-glycero-beta-D-manno-heptose and ADP-L-glycero-beta-D-manno-heptose via an epimerization at carbon 6 of the heptose. The polypeptide is ADP-L-glycero-D-manno-heptose-6-epimerase (Alkalilimnicola ehrlichii (strain ATCC BAA-1101 / DSM 17681 / MLHE-1)).